The primary structure comprises 160 residues: Major pollen allergen Bet v 1-G (160 aa).

Residues K55, Y82, Y84, and N101 each coordinate brassinolide.

Belongs to the BetVI family.

Its subcellular location is the cytoplasm. Its function is as follows. May be a general steroid carrier protein. The polypeptide is Major pollen allergen Bet v 1-G (BETV1G) (Betula pendula (European white birch)).